A 584-amino-acid polypeptide reads, in one-letter code: 2-succinyl-5-enolpyruvyl-6-hydroxy-3-cyclohexene-1-carboxylate synthase (584 aa).

Residues 563–584 are disordered; that stretch reads TDAEASHRERERLADRVTGLSV. Positions 566-577 are enriched in basic and acidic residues; sequence EASHRERERLAD.

Belongs to the TPP enzyme family. MenD subfamily. Homodimer. The cofactor is Mg(2+). It depends on Mn(2+) as a cofactor. Thiamine diphosphate is required as a cofactor.

The catalysed reaction is isochorismate + 2-oxoglutarate + H(+) = 5-enolpyruvoyl-6-hydroxy-2-succinyl-cyclohex-3-ene-1-carboxylate + CO2. Its pathway is quinol/quinone metabolism; 1,4-dihydroxy-2-naphthoate biosynthesis; 1,4-dihydroxy-2-naphthoate from chorismate: step 2/7. It participates in quinol/quinone metabolism; menaquinone biosynthesis. Functionally, catalyzes the thiamine diphosphate-dependent decarboxylation of 2-oxoglutarate and the subsequent addition of the resulting succinic semialdehyde-thiamine pyrophosphate anion to isochorismate to yield 2-succinyl-5-enolpyruvyl-6-hydroxy-3-cyclohexene-1-carboxylate (SEPHCHC). This Halobacterium salinarum (strain ATCC 29341 / DSM 671 / R1) protein is 2-succinyl-5-enolpyruvyl-6-hydroxy-3-cyclohexene-1-carboxylate synthase.